We begin with the raw amino-acid sequence, 488 residues long: Protein nucleotidyltransferase YdiU (488 aa).

Residues Gly-91, Gly-93, Arg-94, Lys-114, Asp-126, Gly-127, Arg-177, and Arg-184 each contribute to the ATP site. Asp-253 (proton acceptor) is an active-site residue. Mg(2+) is bound by residues Asn-254 and Asp-263. Asp-263 contacts ATP.

The protein belongs to the SELO family. It depends on Mg(2+) as a cofactor. Mn(2+) serves as cofactor.

The enzyme catalyses L-seryl-[protein] + ATP = 3-O-(5'-adenylyl)-L-seryl-[protein] + diphosphate. It catalyses the reaction L-threonyl-[protein] + ATP = 3-O-(5'-adenylyl)-L-threonyl-[protein] + diphosphate. The catalysed reaction is L-tyrosyl-[protein] + ATP = O-(5'-adenylyl)-L-tyrosyl-[protein] + diphosphate. It carries out the reaction L-histidyl-[protein] + UTP = N(tele)-(5'-uridylyl)-L-histidyl-[protein] + diphosphate. The enzyme catalyses L-seryl-[protein] + UTP = O-(5'-uridylyl)-L-seryl-[protein] + diphosphate. It catalyses the reaction L-tyrosyl-[protein] + UTP = O-(5'-uridylyl)-L-tyrosyl-[protein] + diphosphate. Its function is as follows. Nucleotidyltransferase involved in the post-translational modification of proteins. It can catalyze the addition of adenosine monophosphate (AMP) or uridine monophosphate (UMP) to a protein, resulting in modifications known as AMPylation and UMPylation. The protein is Protein nucleotidyltransferase YdiU of Bacillus thuringiensis subsp. konkukian (strain 97-27).